We begin with the raw amino-acid sequence, 752 residues long: DNA topoisomerase 4 subunit A (752 aa).

Residues 31-494 (LPFIGDGLKP…EAKAMSEHDM (464 aa)) form the Topo IIA-type catalytic domain. The active-site O-(5'-phospho-DNA)-tyrosine intermediate is tyrosine 120. The segment at 472-492 (YGDDRRSPLREREEAKAMSEH) is disordered. Residues 473–492 (GDDRRSPLREREEAKAMSEH) show a composition bias toward basic and acidic residues.

This sequence belongs to the type II topoisomerase GyrA/ParC subunit family. ParC type 1 subfamily. As to quaternary structure, heterotetramer composed of ParC and ParE.

The protein localises to the cell membrane. It carries out the reaction ATP-dependent breakage, passage and rejoining of double-stranded DNA.. Its function is as follows. Topoisomerase IV is essential for chromosome segregation. It relaxes supercoiled DNA. Performs the decatenation events required during the replication of a circular DNA molecule. This is DNA topoisomerase 4 subunit A from Salmonella typhimurium (strain LT2 / SGSC1412 / ATCC 700720).